Reading from the N-terminus, the 284-residue chain is 2-dehydro-3-deoxyphosphooctonate aldolase (284 aa).

It belongs to the KdsA family.

It is found in the cytoplasm. It carries out the reaction D-arabinose 5-phosphate + phosphoenolpyruvate + H2O = 3-deoxy-alpha-D-manno-2-octulosonate-8-phosphate + phosphate. It participates in carbohydrate biosynthesis; 3-deoxy-D-manno-octulosonate biosynthesis; 3-deoxy-D-manno-octulosonate from D-ribulose 5-phosphate: step 2/3. It functions in the pathway bacterial outer membrane biogenesis; lipopolysaccharide biosynthesis. This is 2-dehydro-3-deoxyphosphooctonate aldolase from Actinobacillus pleuropneumoniae serotype 7 (strain AP76).